The sequence spans 214 residues: ATP phosphoribosyltransferase (214 aa).

Belongs to the ATP phosphoribosyltransferase family. Short subfamily. As to quaternary structure, heteromultimer composed of HisG and HisZ subunits.

It localises to the cytoplasm. It catalyses the reaction 1-(5-phospho-beta-D-ribosyl)-ATP + diphosphate = 5-phospho-alpha-D-ribose 1-diphosphate + ATP. It participates in amino-acid biosynthesis; L-histidine biosynthesis; L-histidine from 5-phospho-alpha-D-ribose 1-diphosphate: step 1/9. In terms of biological role, catalyzes the condensation of ATP and 5-phosphoribose 1-diphosphate to form N'-(5'-phosphoribosyl)-ATP (PR-ATP). Has a crucial role in the pathway because the rate of histidine biosynthesis seems to be controlled primarily by regulation of HisG enzymatic activity. This is ATP phosphoribosyltransferase (hisG) from Nostoc sp. (strain PCC 7120 / SAG 25.82 / UTEX 2576).